The primary structure comprises 142 residues: Holo-[acyl-carrier-protein] synthase (142 aa).

D8 and E57 together coordinate Mg(2+).

It belongs to the P-Pant transferase superfamily. AcpS family. The cofactor is Mg(2+).

The protein resides in the cytoplasm. The enzyme catalyses apo-[ACP] + CoA = holo-[ACP] + adenosine 3',5'-bisphosphate + H(+). Its function is as follows. Transfers the 4'-phosphopantetheine moiety from coenzyme A to a Ser of acyl-carrier-protein. The chain is Holo-[acyl-carrier-protein] synthase from Ruegeria sp. (strain TM1040) (Silicibacter sp.).